The primary structure comprises 30 residues: rRNA N-glycosylase (30 aa).

The protein belongs to the ribosome-inactivating protein family. Type 1 RIP subfamily. Expressed in seeds.

It carries out the reaction Endohydrolysis of the N-glycosidic bond at one specific adenosine on the 28S rRNA.. Functionally, exhibits N-glycosylase activity. Catalyzes the release of one adenine from a ribosome. Acts as a ribosome-inactivating protein and inhibits protein synthesis in a rabbit-reticulocyte lysate system and in various cell lines (in vitro). In Saponaria ocymoides (Rock soapwort), this protein is rRNA N-glycosylase.